We begin with the raw amino-acid sequence, 325 residues long: Hydroxymethylglutaryl-CoA lyase, mitochondrial (325 aa).

Residues 1–27 (MAAMRKALPRRLVGLASLRAVSTSSMG) constitute a mitochondrion transit peptide. The 268-residue stretch at 33–300 (VKIVEVGPRD…HTGVNLQKLL (268 aa)) folds into the Pyruvate carboxyltransferase domain. Residue Arg-41 participates in substrate binding. Residue Asp-42 coordinates a divalent metal cation. Lys-48 is subject to N6-acetyllysine; alternate. N6-succinyllysine; alternate is present on Lys-48. Lys-111 is modified (N6-acetyllysine). 2 positions are modified to N6-acetyllysine; alternate: Lys-137 and Lys-179. N6-succinyllysine; alternate occurs at positions 137 and 179. Positions 233 and 235 each coordinate a divalent metal cation. Cys-266 is an active-site residue. Asn-275 lines the a divalent metal cation pocket. Residues 323-325 (CKL) carry the Microbody targeting signal motif. Lys-324 carries the N6-acetyllysine modification.

It belongs to the HMG-CoA lyase family. As to quaternary structure, homodimer; disulfide-linked. Can also form homotetramers. A divalent metal cation serves as cofactor. As to expression, highest expression in liver. Expressed in pancreas, kidney, intestine, testis, fibroblasts and lymphoblasts. Very low expression in brain and skeletal muscle. The relative expression of isoform 2 (at mRNA level) is highest in heart (30%), skeletal muscle (22%), and brain (14%).

It is found in the mitochondrion matrix. The protein resides in the peroxisome. It carries out the reaction (3S)-3-hydroxy-3-methylglutaryl-CoA = acetoacetate + acetyl-CoA. The protein operates within metabolic intermediate metabolism; (S)-3-hydroxy-3-methylglutaryl-CoA degradation; acetoacetate from (S)-3-hydroxy-3-methylglutaryl-CoA: step 1/1. Stimulated by reducing agents such as dithiothreitol (DTT). Mitochondrial 3-hydroxy-3-methylglutaryl-CoA lyase that catalyzes a cation-dependent cleavage of (S)-3-hydroxy-3-methylglutaryl-CoA into acetyl-CoA and acetoacetate, a key step in ketogenesis. Terminal step in leucine catabolism. Ketone bodies (beta-hydroxybutyrate, acetoacetate and acetone) are essential as an alternative source of energy to glucose, as lipid precursors and as regulators of metabolism. The polypeptide is Hydroxymethylglutaryl-CoA lyase, mitochondrial (HMGCL) (Homo sapiens (Human)).